Consider the following 376-residue polypeptide: Anhydro-N-acetylmuramic acid kinase (376 aa).

ATP is bound at residue 16–23 (GTSMDGVD).

This sequence belongs to the anhydro-N-acetylmuramic acid kinase family.

The catalysed reaction is 1,6-anhydro-N-acetyl-beta-muramate + ATP + H2O = N-acetyl-D-muramate 6-phosphate + ADP + H(+). It participates in amino-sugar metabolism; 1,6-anhydro-N-acetylmuramate degradation. The protein operates within cell wall biogenesis; peptidoglycan recycling. Functionally, catalyzes the specific phosphorylation of 1,6-anhydro-N-acetylmuramic acid (anhMurNAc) with the simultaneous cleavage of the 1,6-anhydro ring, generating MurNAc-6-P. Is required for the utilization of anhMurNAc either imported from the medium or derived from its own cell wall murein, and thus plays a role in cell wall recycling. This Paraburkholderia xenovorans (strain LB400) protein is Anhydro-N-acetylmuramic acid kinase.